We begin with the raw amino-acid sequence, 137 residues long: MSAALLRRGLELLGAPEAPGAAPGHTKPSQAPMKRTRKAKATQAQKLRNSAKGKVPKSALAEFRKKERRGYLGVNLRFMTSARSTVDESVTRQIMRQNRGRKACDRPVTKTKKKKKAEGTVFTEEDFQKFQREYFGS.

Arg7 bears the Citrulline mark. The segment covering 14 to 24 (GAPEAPGAAPG) has biased composition (low complexity). Residues 14–58 (GAPEAPGAAPGHTKPSQAPMKRTRKAKATQAQKLRNSAKGKVPKS) are disordered. At Ser84 the chain carries Phosphoserine. The tract at residues 96–120 (RQNRGRKACDRPVTKTKKKKKAEGT) is disordered.

The protein belongs to the AROS family. Part of the small subunit (SSU) processome, composed of more than 70 proteins and the RNA chaperone small nucleolar RNA (snoRNA) U3. Interacts with RPS19; the interaction is direct and mediates the integration of RPS19 in state post-A1. Interacts with SIRT1. Citrullinated by PADI4.

It localises to the nucleus. It is found in the nucleolus. Functionally, part of the small subunit (SSU) processome, first precursor of the small eukaryotic ribosomal subunit. During the assembly of the SSU processome in the nucleolus, many ribosome biogenesis factors, an RNA chaperone and ribosomal proteins associate with the nascent pre-rRNA and work in concert to generate RNA folding, modifications, rearrangements and cleavage as well as targeted degradation of pre-ribosomal RNA by the RNA exosome. Acts as a chaperone that specifically mediates the integration of RPS19 in state post-A1. Direct regulator of SIRT1. Enhances SIRT1-mediated deacetylation of p53/TP53, thereby participating in inhibition of p53/TP53-mediated transcriptional activity. The sequence is that of Active regulator of SIRT1 (RPS19BP1) from Bos taurus (Bovine).